The following is a 710-amino-acid chain: Polyribonucleotide nucleotidyltransferase (710 aa).

The Mg(2+) site is built by Asp489 and Asp495. The KH domain occupies 556 to 615 (PKIDTIKIDVDKIKVVIGKGGETIDKIIAETGVKIDIDDEGNVSIYSSDQAAIDRTKEII). Residues 625 to 693 (GEVYHAKVIR…EKGRVDASMK (69 aa)) enclose the S1 motif domain.

It belongs to the polyribonucleotide nucleotidyltransferase family. Mg(2+) serves as cofactor.

Its subcellular location is the cytoplasm. It catalyses the reaction RNA(n+1) + phosphate = RNA(n) + a ribonucleoside 5'-diphosphate. Functionally, involved in mRNA degradation. Catalyzes the phosphorolysis of single-stranded polyribonucleotides processively in the 3'- to 5'-direction. This Streptococcus pyogenes serotype M3 (strain ATCC BAA-595 / MGAS315) protein is Polyribonucleotide nucleotidyltransferase.